The sequence spans 241 residues: GTP cyclohydrolase III (241 aa).

It belongs to the archaeal-type GTP cyclohydrolase family.

It catalyses the reaction GTP + 3 H2O = 2-amino-5-formylamino-6-(5-phospho-D-ribosylamino)pyrimidin-4(3H)-one + 2 phosphate + 2 H(+). In terms of biological role, catalyzes the formation of 2-amino-5-formylamino-6-ribofuranosylamino-4(3H)-pyrimidinone ribonucleotide monophosphate and inorganic phosphate from GTP. Also has an independent pyrophosphate phosphohydrolase activity. This Aeropyrum pernix (strain ATCC 700893 / DSM 11879 / JCM 9820 / NBRC 100138 / K1) protein is GTP cyclohydrolase III.